A 126-amino-acid polypeptide reads, in one-letter code: Bactofilin BacO (126 aa).

The protein belongs to the bactofilin family. Interacts with BacN and probably also BacP, the 3 proteins colocalize as an extended structure. Interacts with PadC.

The protein resides in the cytoplasm. Its subcellular location is the cytoskeleton. Functionally, a non-essential component of the chromosome segregation machinery. Positions the ParA-ParB-parS chromosome segregation machinery within the cell; BacP seems to be the most important bactofilin in this process. Forms a heteropolymeric, subpolar scaffold in the cell; BacP probably forms the core, BacO contributes to position and integrity while BacN does not seem to contribute to assembly. The chain is Bactofilin BacO from Myxococcus xanthus (strain DK1622).